The primary structure comprises 251 residues: 14-3-3-like protein (251 aa).

It belongs to the 14-3-3 family. As to expression, most abundant in roots and flowers.

This Nicotiana tabacum (Common tobacco) protein is 14-3-3-like protein.